The primary structure comprises 490 residues: RNA-binding post-transcriptional regulator cip1 (490 aa).

Disordered regions lie at residues 16-63 (RGLA…GSSA), 76-97 (ASSR…YSQL), and 138-199 (HNVS…GEDT). Residues 34-62 (RLQSPLNSPKLQPIGSPQASRKTSGSGSS) show a composition bias toward polar residues. Ser37, Ser41, Ser49, Ser86, and Ser141 each carry phosphoserine. Low complexity-rich tracts occupy residues 76–88 (ASSR…PSDS) and 141–160 (SPPS…ASGK). Residues 164 to 192 (ADTSAEPSLDAFNSTQIKAGSTANSNSTP) show a composition bias toward polar residues. Residues 202 to 280 (TAIVVKNIPF…RRLRVEWKRQ (79 aa)) enclose the RRM domain. Phosphoserine is present on residues Ser397, Ser401, and Ser427. Thr431 carries the phosphothreonine modification. A phosphoserine mark is found at Ser435, Ser456, and Ser466. Residues 457-490 (PLQKASTLSSPFNSKNDNDASTSASKQSFGVSHF) are disordered.

In terms of assembly, interacts with csx1. Phosphorylated by sty1.

The protein localises to the cytoplasm. In terms of biological role, regulates global gene expression after oxidative stress. Interacts and stabilizes mRNAs and may regulate their transition between different cytoplasmic components after oxidative stress. The chain is RNA-binding post-transcriptional regulator cip1 (cip1) from Schizosaccharomyces pombe (strain 972 / ATCC 24843) (Fission yeast).